Reading from the N-terminus, the 107-residue chain is Circadian clock oscillator protein KaiB (107 aa).

This sequence belongs to the KaiB family. May undergo a major conformational rearrangment; in the free state forms homooligomers. When bound to KaiC switches to a monomeric thioredoxin-fold (KaiB(fs)). The active oscillator complex is probably KaiC(6):KaiB(6).

Functionally, component of the KaiBC clock protein complex, which constitutes the main circadian regulator in cyanobacteria; it may modify the ATPase activity of KaiC. In terms of biological role, may be a metamorphic protein which reversibly switches between an inactive tetrameric fold and a rare, thioredoxin-like monomeric fold (KaiB(fs)). KaiB(fs) binds phospho-KaiC, and perhaps clock output effectors. The protein is Circadian clock oscillator protein KaiB of Prochlorococcus marinus (strain NATL2A).